A 483-amino-acid chain; its full sequence is Altronate oxidoreductase (483 aa).

18–29 (IIQFGEGNFLRA) lines the NAD(+) pocket.

Belongs to the mannitol dehydrogenase family. UxaB subfamily.

The enzyme catalyses D-altronate + NAD(+) = keto-D-tagaturonate + NADH + H(+). The protein operates within carbohydrate metabolism; pentose and glucuronate interconversion. The protein is Altronate oxidoreductase of Yersinia pestis.